The following is a 257-amino-acid chain: Aspartate/glutamate leucyltransferase (257 aa).

The protein belongs to the R-transferase family. Bpt subfamily.

The protein resides in the cytoplasm. It catalyses the reaction N-terminal L-glutamyl-[protein] + L-leucyl-tRNA(Leu) = N-terminal L-leucyl-L-glutamyl-[protein] + tRNA(Leu) + H(+). The enzyme catalyses N-terminal L-aspartyl-[protein] + L-leucyl-tRNA(Leu) = N-terminal L-leucyl-L-aspartyl-[protein] + tRNA(Leu) + H(+). Its function is as follows. Functions in the N-end rule pathway of protein degradation where it conjugates Leu from its aminoacyl-tRNA to the N-termini of proteins containing an N-terminal aspartate or glutamate. In Nitrobacter winogradskyi (strain ATCC 25391 / DSM 10237 / CIP 104748 / NCIMB 11846 / Nb-255), this protein is Aspartate/glutamate leucyltransferase.